A 563-amino-acid polypeptide reads, in one-letter code: Urocanate hydratase (563 aa).

NAD(+) contacts are provided by residues 53-54, Q131, 177-179, E197, R202, 243-244, 264-268, 274-275, and Y323; these read GG, GMG, NA, QTSAH, and YL. C411 is a catalytic residue. G493 lines the NAD(+) pocket.

It belongs to the urocanase family. NAD(+) serves as cofactor.

The protein localises to the cytoplasm. The catalysed reaction is 4-imidazolone-5-propanoate = trans-urocanate + H2O. Its pathway is amino-acid degradation; L-histidine degradation into L-glutamate; N-formimidoyl-L-glutamate from L-histidine: step 2/3. Functionally, catalyzes the conversion of urocanate to 4-imidazolone-5-propionate. In Yersinia pestis bv. Antiqua (strain Antiqua), this protein is Urocanate hydratase.